Here is a 99-residue protein sequence, read N- to C-terminus: Small ribosomal subunit protein bS20 (99 aa).

This sequence belongs to the bacterial ribosomal protein bS20 family.

In terms of biological role, binds directly to 16S ribosomal RNA. The sequence is that of Small ribosomal subunit protein bS20 from Picosynechococcus sp. (strain ATCC 27264 / PCC 7002 / PR-6) (Agmenellum quadruplicatum).